The sequence spans 573 residues: AP-4 complex accessory subunit Tepsin (573 aa).

Residues 8-141 (RDRLSFLHRL…FSDAVPQPPS (134 aa)) enclose the ENTH domain. Disordered regions lie at residues 136–155 (VPQP…MGAQ) and 194–311 (NAVR…NDCQ). Over residues 137-150 (PQPPSQPPQIPPPA) the composition is skewed to pro residues. A compositionally biased stretch (polar residues) spans 217 to 229 (PAVTPSASHTHPN). Over residues 260–293 (SSPSSQNSSCTSNLSRASDSGSRSGSDSHSGTSR) the composition is skewed to low complexity. A compositionally biased stretch (basic and acidic residues) spans 294–303 (EPGDLAERAE). Phosphoserine is present on Ser400. Positions 497 to 526 (CSSEQGTESEQRLENTDTPEDSSSPLPWSP) are disordered. Residues 526–536 (PNSLFAGMELV) form an interaction with AP4B1 region. The interaction with AP4E1 stretch occupies residues 563–573 (SEPSAFAFLNM).

As to quaternary structure, interacts with AP4B1 and AP4E1; the interaction is direct and mediates the association of TEPSIN with the adapter-like complex 4 (AP-4), a heterotetramer composed of AP4B1, AP4E1, AP4M1 and AP4S1.

It localises to the golgi apparatus. The protein resides in the trans-Golgi network membrane. Its subcellular location is the cytoplasmic vesicle. It is found in the cytoplasm. The protein localises to the cytosol. Functionally, associates with the adapter-like complex 4 (AP-4) and may therefore play a role in vesicular trafficking of proteins at the trans-Golgi network. This is AP-4 complex accessory subunit Tepsin from Mus musculus (Mouse).